Here is a 344-residue protein sequence, read N- to C-terminus: MEVGIIGATGYSGLELIRLLKNHPQVTNIMLYSSSQSGETINRLYPHLQNEQWKPLKEIDLNKISAEIDVMFLATPPGVSAEWSGPLLEAGLSVIDLSGDLRLTDRGVYEKWYKRPSAKEGLIEQAIYGLSEWNKSTIKTAKLIANPGCFPTAALLALIPLIQAGAIERDSIVIDAKSGTSGAGKSPTSMTHFSETNENFKIYQVASHKHTPEIEQQLAKWGAQPPLSFQPHLAPMVRGIMATIYAKAAKPLSNEWLTDCYNSAYENAPFVRIKENGTFPATKHVFGSNYCDIGFCYDERTGRVIVASVIDNLMKGAAGQAVQNFNLMHGFDETAGLEAVPMYP.

Cysteine 149 is an active-site residue.

This sequence belongs to the NAGSA dehydrogenase family. Type 1 subfamily.

Its subcellular location is the cytoplasm. It carries out the reaction N-acetyl-L-glutamate 5-semialdehyde + phosphate + NADP(+) = N-acetyl-L-glutamyl 5-phosphate + NADPH + H(+). Its pathway is amino-acid biosynthesis; L-arginine biosynthesis; N(2)-acetyl-L-ornithine from L-glutamate: step 3/4. In terms of biological role, catalyzes the NADPH-dependent reduction of N-acetyl-5-glutamyl phosphate to yield N-acetyl-L-glutamate 5-semialdehyde. This is N-acetyl-gamma-glutamyl-phosphate reductase from Shouchella clausii (strain KSM-K16) (Alkalihalobacillus clausii).